A 629-amino-acid chain; its full sequence is mRNA cleavage and polyadenylation factor CLP1 (629 aa).

Positions 21 and 72 each coordinate ATP. Positions 142–166 (YIAPRTTDPNTETESDPSGTAAATV) are disordered. Polar residues predominate over residues 148 to 159 (TDPNTETESDPS). 183–188 (SAGKTS) serves as a coordination point for ATP. The disordered stretch occupies residues 562–582 (PPRGGGGAGQPDSSTNPTDDE).

This sequence belongs to the Clp1 family. Clp1 subfamily. In terms of assembly, component of a pre-mRNA cleavage factor complex. Interacts directly with PCF11.

It localises to the nucleus. Its function is as follows. Required for endonucleolytic cleavage during polyadenylation-dependent pre-mRNA 3'-end formation. In Mycosarcoma maydis (Corn smut fungus), this protein is mRNA cleavage and polyadenylation factor CLP1.